The chain runs to 154 residues: 3-hydroxyacyl-[acyl-carrier-protein] dehydratase FabZ (154 aa).

Residue H57 is part of the active site.

This sequence belongs to the thioester dehydratase family. FabZ subfamily.

Its subcellular location is the cytoplasm. It catalyses the reaction a (3R)-hydroxyacyl-[ACP] = a (2E)-enoyl-[ACP] + H2O. Functionally, involved in unsaturated fatty acids biosynthesis. Catalyzes the dehydration of short chain beta-hydroxyacyl-ACPs and long chain saturated and unsaturated beta-hydroxyacyl-ACPs. The polypeptide is 3-hydroxyacyl-[acyl-carrier-protein] dehydratase FabZ (Allorhizobium ampelinum (strain ATCC BAA-846 / DSM 112012 / S4) (Agrobacterium vitis (strain S4))).